The following is a 460-amino-acid chain: Ammonium transporter Rh type B-A (460 aa).

At 1 to 10 (MTGYSTNMRI) the chain is on the cytoplasmic side. Residues 11 to 31 (KLPLFCLILQFITIILFAVFV) form a helical membrane-spanning segment. Topologically, residues 32-62 (RYDHESDARGWHDELKNHSTANADNDFYFRY) are extracellular. The N-linked (GlcNAc...) asparagine glycan is linked to N48. The helical transmembrane segment at 63 to 83 (PSFQDVHVMIFIGFGFLMTFL) threads the bilayer. The Cytoplasmic segment spans residues 84-87 (KRYG). A helical transmembrane segment spans residues 88–108 (FSSVAFNFLIAAFGLQWSTLI). Residues 109 to 125 (QGFFHGFHDGKIHVGIE) are Extracellular-facing. The chain crosses the membrane as a helical span at residues 126-146 (SMINADFCTGAVLISFGAVLG). The Cytoplasmic segment spans residues 147-150 (KTSP). Residues 151–171 (VQLIVMTLIEVTLFGINEYII) form a helical membrane-spanning segment. At 172 to 179 (LNIVGAKD) the chain is on the extracellular side. Residues 180 to 202 (AGGSMTIHTFGAYFGLIVSRVLY) form a helical membrane-spanning segment. Residues 203 to 220 (RADLDKSRQREGSVYHSD) are Cytoplasmic-facing. A helical transmembrane segment spans residues 221–241 (LFAMIGTIYLWMFWPSFNSAV). The Extracellular segment spans residues 242–252 (TAHGDDQHRTV). A helical membrane pass occupies residues 253-273 (LNTYYSLAACTLATFGFSALL). Residues 274 to 283 (NGEGKLDMVH) are Cytoplasmic-facing. Residues 284-304 (IQNAALAGGVAVGTSGEMMLT) form a helical membrane-spanning segment. Position 305 (P305) is a topological domain, extracellular. Residues 306–326 (FGAMIAGTLAGIVSVLGYKYL) form a helical membrane-spanning segment. Over 327–347 (TPVLDSKLKIQDTCGVHNLHG) the chain is Cytoplasmic. Residues 348–368 (MPGILGAVIGAIVALFATADI) traverse the membrane as a helical segment. Over 369-394 (YGDGMDDVFPMIFDGSRTAKQQSLYQ) the chain is Extracellular. The chain crosses the membrane as a helical span at residues 395–415 (FLALLVALGFAIVGGTVVGFI). Topologically, residues 416-460 (LKLPLFGTPSDAECFEDAVYWEVPGGEGHQQLTVVVNNEDPDTQA) are cytoplasmic.

It belongs to the ammonium transporter (TC 2.A.49) family. Rh subfamily.

The protein localises to the basolateral cell membrane. The protein resides in the cytoplasmic vesicle membrane. Its function is as follows. Functions as a specific ammonium transporter. This is Ammonium transporter Rh type B-A (rhbg-a) from Xenopus laevis (African clawed frog).